The chain runs to 113 residues: U11-theraphotoxin-Hhn1p (113 aa).

The first 21 residues, 1-21 (MNTVRVTFLLVFVLAVSLGQA), serve as a signal peptide directing secretion. Residues 22 to 74 (DKDENRMEMQEKTEQGKSYLDFAENLLLQKLEELEAKLLEEDSEESRNSRQKR) constitute a propeptide that is removed on maturation. The disordered stretch occupies residues 61 to 83 (EEDSEESRNSRQKRCIGEGVPCD). 3 disulfides stabilise this stretch: Cys75-Cys90, Cys82-Cys95, and Cys89-Cys110.

It belongs to the neurotoxin 14 (magi-1) family. 01 (HNTX-16) subfamily. As to expression, expressed by the venom gland.

The protein localises to the secreted. Functionally, probable ion channel inhibitor. The protein is U11-theraphotoxin-Hhn1p of Cyriopagopus hainanus (Chinese bird spider).